Reading from the N-terminus, the 315-residue chain is Protein-export membrane protein SecF (315 aa).

6 helical membrane passes run 35–55 (MVLY…VHFP), 152–172 (QGIK…FLFF), 181–201 (IIFS…ILGI), 205–225 (TATI…NILL), 242–264 (LSAV…ILWL), and 282–302 (LLAD…WYIA).

It belongs to the SecD/SecF family. SecF subfamily. Part of the protein translocation apparatus. Forms a complex with SecD.

The protein localises to the cell membrane. Functionally, involved in protein export. In Thermococcus gammatolerans (strain DSM 15229 / JCM 11827 / EJ3), this protein is Protein-export membrane protein SecF.